The primary structure comprises 161 residues: DNA-directed RNA polymerase 18 kDa subunit (161 aa).

This sequence belongs to the poxviridae DNA-directed RNA polymerase 18 kDa subunit family. The DNA-dependent RNA polymerase used for intermediate and late genes expression consists of eight subunits Rpo30/OPG66, Rpo7/OPG90, Rpo22/OPG103, Rpo147/OPG105, Rpo18/OPG119, Rpo19/OPG131, Rpo132/OPG151 and Rpo35/OPG156. The same holoenzyme, with the addition of the transcription-specificity factor OPG109, is used for early gene expression.

The protein resides in the virion. It carries out the reaction RNA(n) + a ribonucleoside 5'-triphosphate = RNA(n+1) + diphosphate. Part of the DNA-dependent RNA polymerase which catalyzes the transcription of viral DNA into RNA using the four ribonucleoside triphosphates as substrates. Responsible for the transcription of early, intermediate and late genes. DNA-dependent RNA polymerase associates with the early transcription factor (ETF), itself composed of OPG118 and OPG133, thereby allowing the early genes transcription. Late transcription, and probably also intermediate transcription, require newly synthesized RNA polymerase. This is DNA-directed RNA polymerase 18 kDa subunit (OPG119) from Homo sapiens (Human).